The chain runs to 436 residues: Na(+)/H(+) antiporter NhaA (436 aa).

11 helical membrane-spanning segments follow: residues 14–34, 59–79, 95–115, 125–145, 152–172, 176–196, 214–234, 300–320, 336–356, 374–394, and 407–427; these read AGGIVLIAATILTLILSNSTW, LHHWINDGLMAVFFFVVGLEL, ALPVIAALGGMLAPALIYHQF, WGIPMATDIAFAIGILVLLAW, IIFLTALAIADDLGAVLVIAI, PALHIKALMIAALLLLALLLF, FWYFVILSGIHATVAGIFLAF, AIQPWVTFAVLPVFALANAGI, IGTCLGLVLGKFLGIGLSSWL, LLGAAWLGGIGFTMSLFIGQL, and LGILLASLIAASIGLLWLFQV.

This sequence belongs to the NhaA Na(+)/H(+) (TC 2.A.33) antiporter family.

The protein resides in the cell inner membrane. It carries out the reaction Na(+)(in) + 2 H(+)(out) = Na(+)(out) + 2 H(+)(in). Its function is as follows. Na(+)/H(+) antiporter that extrudes sodium in exchange for external protons. This chain is Na(+)/H(+) antiporter NhaA, found in Acidithiobacillus ferrooxidans (strain ATCC 23270 / DSM 14882 / CIP 104768 / NCIMB 8455) (Ferrobacillus ferrooxidans (strain ATCC 23270)).